Consider the following 495-residue polypeptide: tRNA-guanine(15) transglycosylase (495 aa).

Asp83 acts as the Nucleophile in catalysis. Asp118 is a substrate binding site. The Zn(2+) site is built by Cys273 and Cys278.

This sequence belongs to the archaeosine tRNA-ribosyltransferase family. Zn(2+) serves as cofactor.

The enzyme catalyses guanosine(15) in tRNA + 7-cyano-7-deazaguanine = 7-cyano-7-carbaguanosine(15) in tRNA + guanine. It participates in tRNA modification; archaeosine-tRNA biosynthesis. Exchanges the guanine residue with 7-cyano-7-deazaguanine (preQ0) at position 15 in the dihydrouridine loop (D-loop) of archaeal tRNAs. This is tRNA-guanine(15) transglycosylase from Pyrobaculum aerophilum (strain ATCC 51768 / DSM 7523 / JCM 9630 / CIP 104966 / NBRC 100827 / IM2).